A 44-amino-acid chain; its full sequence is Large ribosomal subunit protein bL34 (44 aa).

This sequence belongs to the bacterial ribosomal protein bL34 family.

This is Large ribosomal subunit protein bL34 from Wolbachia sp. subsp. Brugia malayi (strain TRS).